Reading from the N-terminus, the 44-residue chain is uncharacterized protein (44 aa).

Residues 1–16 (MRISLLAVILALLFVA) form the signal peptide.

This is an uncharacterized protein from Helicobacter pylori (strain ATCC 700392 / 26695) (Campylobacter pylori).